Here is a 213-residue protein sequence, read N- to C-terminus: ATP synthase peripheral stalk subunit OSCP, mitochondrial (213 aa).

A mitochondrion-targeting transit peptide spans 1–23; that stretch reads MAAPAVSGLSRQVRYFSTSVVRP. The SIFI-degron motif lies at 5–23; it reads AVSGLSRQVRYFSTSVVRP. N6-acetyllysine occurs at positions 54, 60, 70, and 73. Lys-90 is subject to N6-succinyllysine. Lys-158 and Lys-162 each carry N6-acetyllysine; alternate. 2 positions are modified to N6-succinyllysine; alternate: Lys-158 and Lys-162. An N6-acetyllysine mark is found at Lys-172, Lys-176, and Lys-192. Lys-199 is modified (N6-succinyllysine).

The protein belongs to the ATPase delta chain family. Component of the ATP synthase complex composed at least of ATP5F1A/subunit alpha, ATP5F1B/subunit beta, ATP5MC1/subunit c (homooctomer), MT-ATP6/subunit a, MT-ATP8/subunit 8, ATP5ME/subunit e, ATP5MF/subunit f, ATP5MG/subunit g, ATP5MK/subunit k, ATP5MJ/subunit j, ATP5F1C/subunit gamma, ATP5F1D/subunit delta, ATP5F1E/subunit epsilon, ATP5PF/subunit F6, ATP5PB/subunit b, ATP5PD/subunit d, ATP5PO/subunit OSCP. ATP synthase complex consists of a soluble F(1) head domain (subunits alpha(3) and beta(3)) - the catalytic core - and a membrane F(0) domain - the membrane proton channel (subunits c, a, 8, e, f, g, k and j). These two domains are linked by a central stalk (subunits gamma, delta, and epsilon) rotating inside the F1 region and a stationary peripheral stalk (subunits F6, b, d, and OSCP). Post-translationally, acetylation at Lys-162 decreases ATP production. Deacetylated by SIRT3. In terms of processing, in response to mitochondrial stress, the precursor protein is ubiquitinated by the SIFI complex in the cytoplasm before mitochondrial import, leading to its degradation. Within the SIFI complex, UBR4 initiates ubiquitin chain that are further elongated or branched by KCMF1.

It is found in the mitochondrion. The protein localises to the mitochondrion inner membrane. In terms of biological role, subunit OSCP, of the mitochondrial membrane ATP synthase complex (F(1)F(0) ATP synthase or Complex V) that produces ATP from ADP in the presence of a proton gradient across the membrane which is generated by electron transport complexes of the respiratory chain. ATP synthase complex consist of a soluble F(1) head domain - the catalytic core - and a membrane F(1) domain - the membrane proton channel. These two domains are linked by a central stalk rotating inside the F(1) region and a stationary peripheral stalk. During catalysis, ATP synthesis in the catalytic domain of F(1) is coupled via a rotary mechanism of the central stalk subunits to proton translocation. In vivo, can only synthesize ATP although its ATP hydrolase activity can be activated artificially in vitro. Part of the complex F(0) domain. Part of the complex F(0) domain and the peripheric stalk, which acts as a stator to hold the catalytic alpha(3)beta(3) subcomplex and subunit a/ATP6 static relative to the rotary elements. This is ATP synthase peripheral stalk subunit OSCP, mitochondrial from Plecturocebus moloch (Dusky titi monkey).